The chain runs to 78 residues: DNA-directed RNA polymerase subunit Rpo5 (78 aa).

The protein belongs to the archaeal Rpo5/eukaryotic RPB5 RNA polymerase subunit family. As to quaternary structure, part of the RNA polymerase complex.

The protein localises to the cytoplasm. It catalyses the reaction RNA(n) + a ribonucleoside 5'-triphosphate = RNA(n+1) + diphosphate. DNA-dependent RNA polymerase (RNAP) catalyzes the transcription of DNA into RNA using the four ribonucleoside triphosphates as substrates. The sequence is that of DNA-directed RNA polymerase subunit Rpo5 from Methanosarcina barkeri (strain Fusaro / DSM 804).